A 296-amino-acid chain; its full sequence is N-acetylmuramic acid 6-phosphate etherase (296 aa).

The SIS domain occupies 54-217; the sequence is VIASFQQGGR…STTAMVGIGK (164 aa). The active-site Proton donor is glutamate 82. Glutamate 113 is a catalytic residue.

It belongs to the GCKR-like family. MurNAc-6-P etherase subfamily. Homodimer.

It catalyses the reaction N-acetyl-D-muramate 6-phosphate + H2O = N-acetyl-D-glucosamine 6-phosphate + (R)-lactate. Its pathway is amino-sugar metabolism; N-acetylmuramate degradation. Functionally, specifically catalyzes the cleavage of the D-lactyl ether substituent of MurNAc 6-phosphate, producing GlcNAc 6-phosphate and D-lactate. The protein is N-acetylmuramic acid 6-phosphate etherase of Shouchella clausii (strain KSM-K16) (Alkalihalobacillus clausii).